A 34-amino-acid chain; its full sequence is Photosystem II reaction center protein Psb30 (34 aa).

A helical transmembrane segment spans residues 6–26 (VIGQLVSTGLIGLLGPAVIIL).

This sequence belongs to the Psb30/Ycf12 family. PSII is composed of 1 copy each of membrane proteins PsbA, PsbB, PsbC, PsbD, PsbE, PsbF, PsbH, PsbI, PsbJ, PsbK, PsbL, PsbM, PsbT, PsbX, PsbY, PsbZ, Psb30/Ycf12, peripheral proteins of the oxygen-evolving complex and a large number of cofactors. It forms dimeric complexes.

It is found in the plastid. It localises to the chloroplast thylakoid membrane. A core subunit of photosystem II (PSII), probably helps stabilize the reaction center. The sequence is that of Photosystem II reaction center protein Psb30 from Skeletonema costatum (Marine centric diatom).